A 79-amino-acid chain; its full sequence is Large ribosomal subunit protein uL24 (79 aa).

The protein belongs to the universal ribosomal protein uL24 family. As to quaternary structure, part of the 50S ribosomal subunit.

Functionally, one of two assembly initiator proteins, it binds directly to the 5'-end of the 23S rRNA, where it nucleates assembly of the 50S subunit. One of the proteins that surrounds the polypeptide exit tunnel on the outside of the subunit. The chain is Large ribosomal subunit protein uL24 from Lactobacillus delbrueckii subsp. bulgaricus (strain ATCC 11842 / DSM 20081 / BCRC 10696 / JCM 1002 / NBRC 13953 / NCIMB 11778 / NCTC 12712 / WDCM 00102 / Lb 14).